Here is a 301-residue protein sequence, read N- to C-terminus: Acetylglutamate kinase (301 aa).

Substrate contacts are provided by residues 64-65 (GG), Arg86, and Asn181.

The protein belongs to the acetylglutamate kinase family. ArgB subfamily.

The protein localises to the cytoplasm. The enzyme catalyses N-acetyl-L-glutamate + ATP = N-acetyl-L-glutamyl 5-phosphate + ADP. The protein operates within amino-acid biosynthesis; L-arginine biosynthesis; N(2)-acetyl-L-ornithine from L-glutamate: step 2/4. In terms of biological role, catalyzes the ATP-dependent phosphorylation of N-acetyl-L-glutamate. This is Acetylglutamate kinase from Aliarcobacter butzleri (strain RM4018) (Arcobacter butzleri).